The primary structure comprises 327 residues: Dolichyl-phosphate beta-glucosyltransferase ALG5D (327 aa).

Residues 1-6 lie on the Lumenal side of the membrane; it reads MEKQLA. A helical membrane pass occupies residues 7 to 27; the sequence is ELSVYILIIFLILGFIMAILM. The Cytoplasmic segment spans residues 28–327; the sequence is RFGDDTTLFD…NIWTIRDRKF (300 aa).

It belongs to the glycosyltransferase 2 family.

It is found in the endoplasmic reticulum membrane. It carries out the reaction a di-trans,poly-cis-dolichyl phosphate + UDP-alpha-D-glucose = a di-trans,poly-cis-dolichyl beta-D-glucosyl phosphate + UDP. It functions in the pathway protein modification; protein glycosylation. Dolichyl-phosphate beta-glucosyltransferase involved in the glycosylation of glycoproteins through the synthesis of dolichyl beta-D-glucosyl phosphate which serves as a sugar donor for transfer of three glucose residues to the Man-9-GlcNAc-2-PP-dolichol precursor to N-glycans. This Trichomonas vaginalis (strain ATCC PRA-98 / G3) protein is Dolichyl-phosphate beta-glucosyltransferase ALG5D.